The following is a 344-amino-acid chain: Anthranilate phosphoribosyltransferase (344 aa).

5-phospho-alpha-D-ribose 1-diphosphate is bound by residues Gly84, 87-88, Thr92, 94-97, 112-120, and Ser124; these read GD, NIST, and KHGNRSVSS. Gly84 lines the anthranilate pocket. Residue Ser96 coordinates Mg(2+). Asn115 contributes to the anthranilate binding site. Arg170 contacts anthranilate. Positions 229 and 230 each coordinate Mg(2+).

Belongs to the anthranilate phosphoribosyltransferase family. Homodimer. Mg(2+) serves as cofactor.

The catalysed reaction is N-(5-phospho-beta-D-ribosyl)anthranilate + diphosphate = 5-phospho-alpha-D-ribose 1-diphosphate + anthranilate. It functions in the pathway amino-acid biosynthesis; L-tryptophan biosynthesis; L-tryptophan from chorismate: step 2/5. In terms of biological role, catalyzes the transfer of the phosphoribosyl group of 5-phosphorylribose-1-pyrophosphate (PRPP) to anthranilate to yield N-(5'-phosphoribosyl)-anthranilate (PRA). This is Anthranilate phosphoribosyltransferase from Xylella fastidiosa (strain M23).